A 268-amino-acid polypeptide reads, in one-letter code: Tryptophan synthase alpha chain (268 aa).

Catalysis depends on proton acceptor residues E49 and D60.

Belongs to the TrpA family. In terms of assembly, tetramer of two alpha and two beta chains.

The enzyme catalyses (1S,2R)-1-C-(indol-3-yl)glycerol 3-phosphate + L-serine = D-glyceraldehyde 3-phosphate + L-tryptophan + H2O. The protein operates within amino-acid biosynthesis; L-tryptophan biosynthesis; L-tryptophan from chorismate: step 5/5. Functionally, the alpha subunit is responsible for the aldol cleavage of indoleglycerol phosphate to indole and glyceraldehyde 3-phosphate. In Xanthomonas axonopodis pv. citri (strain 306), this protein is Tryptophan synthase alpha chain.